We begin with the raw amino-acid sequence, 146 residues long: Hemoglobin subunit beta-1 (146 aa).

Positions 2–146 constitute a Globin domain; the sequence is HWTAEEKHLL…VAHALARRYH (145 aa). Heme b-binding residues include His-63 and His-92.

The protein belongs to the globin family. As to quaternary structure, there are three forms of hemoglobin in Sphenodon: A, A' and D. Hb A is a tetramer of two alpha-A and two beta-1, Hb A' is a tetramer of two alpha-a and two beta-2, Hb D is a tetramer of two alpha-D and two beta-2.

Functionally, involved in oxygen transport from the lung to the various peripheral tissues. The sequence is that of Hemoglobin subunit beta-1 (HBB1) from Sphenodon punctatus (Tuatara).